The following is a 1720-amino-acid chain: 182 kDa tankyrase-1-binding protein (1720 aa).

The disordered stretch occupies residues 1–137; it reads MKGSTLREGT…PPLTPPARCA (137 aa). Ser-14 carries the post-translational modification Phosphoserine. Basic and acidic residues predominate over residues 117–127; it reads SGKEDAGKEDL. At Thr-131 the chain carries Phosphothreonine. A phosphoserine mark is found at Ser-178 and Ser-220. Disordered regions lie at residues 185-472 and 485-595; these read SRLT…ESNW and RPSG…EDQE. The segment at 209 to 1563 is acidic; sequence EEDSKSPAKG…TEILDSAMYR (1355 aa). Basic and acidic residues predominate over residues 232–243; sequence QEEHSKTPEERN. Thr-238 bears the Phosphothreonine mark. The segment covering 266 to 287 has biased composition (polar residues); sequence VSKTWVTSSADPVSEHGGSTSA. 2 positions are modified to phosphoserine: Ser-286 and Ser-300. Low complexity predominate over residues 296 to 316; the sequence is PASESPRLSSRPSSPCHSQLS. The span at 317–327 shows a compositional bias: polar residues; the sequence is ETQSPAASEAS. Phosphoserine occurs at positions 429 and 437. A compositionally biased stretch (polar residues) spans 449 to 459; it reads TLPQGQGSQSA. A phosphoserine mark is found at Ser-496 and Ser-500. Residues 502–518 show a composition bias toward low complexity; the sequence is ITEASEAAEAAEADSWA. Phosphothreonine occurs at positions 503 and 533. Phosphoserine is present on residues Ser-539, Ser-568, Ser-602, Ser-673, Ser-692, and Ser-713. Disordered regions lie at residues 659 to 720, 734 to 924, and 955 to 1081; these read TTLP…CSEG, GVAT…EFEK, and SGGG…GWAG. Positions 742–758 are enriched in low complexity; it reads SSFGSSSWSQDTSQNYS. Residues Ser-763, Ser-796, Ser-807, Ser-845, Ser-866, Ser-871, Ser-876, Ser-887, Ser-912, Ser-976, Ser-980, Ser-1006, Ser-1017, and Ser-1022 each carry the phosphoserine modification. Residues 840-866 show a composition bias toward basic and acidic residues; that stretch reads FGKRESQDPHSIHDKELQDQEFGKRDS. The segment covering 991–1014 has biased composition (basic and acidic residues); that stretch reads FEKKTPVGEDRFCEASRDVGHLEE. The span at 1027–1039 shows a compositional bias: basic and acidic residues; that stretch reads HSRDGAARPKDEG. Ser-1047, Ser-1063, Ser-1084, Ser-1096, Ser-1126, Ser-1131, Ser-1171, Ser-1212, Ser-1241, and Ser-1246 each carry phosphoserine. Residues 1128-1153 are disordered; sequence AGLSPSRKSGGGHFVPPGETKAGAVD. Residues 1198-1255 are disordered; that stretch reads LARRLGTGESEEPRSLGVGEKDWTSSVEARNRDLPGQAEVGRHSQARESGVGEPDWSG. A compositionally biased stretch (basic and acidic residues) spans 1208–1230; the sequence is EEPRSLGVGEKDWTSSVEARNRD. At Thr-1275 the chain carries Phosphothreonine. Phosphoserine occurs at positions 1290, 1321, 1324, 1373, and 1375. The interval 1358–1546 is disordered; that stretch reads GRVGPDLELD…RGLLPSCPSE (189 aa). Polar residues predominate over residues 1402–1411; it reads EDSSSPSFET. A phosphoserine mark is found at Ser-1425, Ser-1429, Ser-1437, Ser-1440, Ser-1442, Ser-1463, and Ser-1466. The span at 1428-1457 shows a compositional bias: polar residues; that stretch reads ASPSSCLTRSPPSGSQSLLEGIMTASSSKG. Residues 1440–1532 form a tankyrase-binding region; sequence SGSQSLLEGI…QNEQASAPPP (93 aa). Residues 1477-1489 show a composition bias toward low complexity; sequence LAAGAGQGEPQEP. Ser-1496 is subject to Phosphoserine. A compositionally biased stretch (polar residues) spans 1515–1527; it reads WSLTGAARQNEQA. Ser-1549 is subject to Phosphoserine. Thr-1554 is subject to Phosphothreonine. A disordered region spans residues 1567-1720; sequence NLGRKRGHRA…QALKLKKKKI (154 aa). A compositionally biased stretch (basic residues) spans 1568-1577; sequence LGRKRGHRAP. Residues 1593-1606 show a composition bias toward basic and acidic residues; sequence SDTRLFQDSTEPRA. Phosphoserine is present on residues Ser-1611, Ser-1612, and Ser-1622. The Nuclear localization signal signature appears at 1620–1626; sequence PQSRRTR. N6-methyllysine is present on Lys-1635. Phosphoserine occurs at positions 1643 and 1657. A compositionally biased stretch (basic and acidic residues) spans 1656 to 1670; it reads RSAEEGEVTESKSSQ. Residues 1671–1690 are compositionally biased toward low complexity; sequence KESSVQRSKSCKVPGLGKPL. A Phosphoserine modification is found at Ser-1706. A Nuclear localization signal motif is present at residues 1714–1719; the sequence is KLKKKK.

As to quaternary structure, binds to the ANK repeat domain of TNKS1 and TNKS2. ADP-ribosylated by TNKS1.

It localises to the nucleus. It is found in the cytoplasm. The protein localises to the cytoskeleton. The protein resides in the chromosome. The protein is 182 kDa tankyrase-1-binding protein (Tnks1bp1) of Mus musculus (Mouse).